A 381-amino-acid polypeptide reads, in one-letter code: Gustatory and pheromone receptor 39a, isoform C (381 aa).

The Cytoplasmic segment spans residues 1 to 37 (MDFQPGELCAYYRLCRYLGIFCIDYNPTKKKFRLRRS). Residues 38–58 (VLCYIVHFALQAYLVGCISVM) traverse the membrane as a helical segment. The Extracellular portion of the chain corresponds to 59 to 79 (VTYWRRCFKSELTTTGNHFDR). A helical transmembrane segment spans residues 80 to 100 (LVMVIALGILVVQNAWLIWLQ). Residues 101 to 129 (APHLRIVRQIEFYRRNHLANVRLLLPKRL) are Cytoplasmic-facing. Residues 130–150 (LWLIIATNVVYMANFIKTCIF) form a helical membrane-spanning segment. At 151 to 171 (EWLTDASRLFVITSLGFPLRY) the chain is on the extracellular side. The helical transmembrane segment at 172–192 (LVTSFTMGTYFCMVHIVRLVL) threads the bilayer. Topologically, residues 193 to 239 (DWNQSQINAIIDESADLKMTSPNRLRLRVCLEMHDRLMLLCNDEISL) are cytoplasmic. Residues 240-260 (VYGFIAWLSWMFASLDVTGVI) traverse the membrane as a helical segment. Topologically, residues 261–271 (YLTMVIQTKKS) are extracellular. Residues 272 to 292 (IVLKLITNVVWLSPTFMTCAA) form a helical membrane-spanning segment. At 293–350 (SFMSNRVTIQANKTAKMLTKVPRTGTGLDRMIEKFLLKNLRQKPILTAYGFFALDKST) the chain is on the cytoplasmic side. A helical transmembrane segment spans residues 351 to 371 (LFKLFTAIFTYMVILVQFKEM). Residues 372–381 (ENSTKSINKF) lie on the Extracellular side of the membrane. N373 carries an N-linked (GlcNAc...) asparagine glycan.

Belongs to the insect chemoreceptor superfamily. Gustatory receptor (GR) family. Gr21a subfamily. As to expression, expressed in the adult labellar chemosensory neurons. In larvae, is expressed in neurons of the terminal external chemosensory organ, as well as in the dorsal pharyngeal sense organ.

The protein localises to the cell membrane. Functionally, gustatory receptor which mediates acceptance or avoidance behavior, depending on its substrates. Plays a role in sustaining courtship behavior in males, possibly through the reception of a stimulating arrestant pheromone. The protein is Gustatory and pheromone receptor 39a, isoform C (Gr39a) of Drosophila melanogaster (Fruit fly).